Reading from the N-terminus, the 1143-residue chain is ATP-dependent helicase/deoxyribonuclease subunit B (1143 aa).

The UvrD-like helicase ATP-binding domain occupies 1–274 (MNYMHLGRAG…YGQTVKFQST (274 aa)). 7–14 (GRAGTGKT) is an ATP binding site. One can recognise a UvrD-like helicase C-terminal domain in the interval 267 to 565 (QTVKFQSTGL…RFSLVPPSLD (299 aa)). Positions 782, 1104, 1107, and 1113 each coordinate [4Fe-4S] cluster.

Belongs to the helicase family. AddB/RexB type 1 subfamily. In terms of assembly, heterodimer of AddA and AddB. Mg(2+) is required as a cofactor. Requires [4Fe-4S] cluster as cofactor.

In terms of biological role, the heterodimer acts as both an ATP-dependent DNA helicase and an ATP-dependent, dual-direction single-stranded exonuclease. Recognizes the chi site generating a DNA molecule suitable for the initiation of homologous recombination. The AddB subunit has 5' -&gt; 3' nuclease activity but not helicase activity. The sequence is that of ATP-dependent helicase/deoxyribonuclease subunit B from Exiguobacterium sibiricum (strain DSM 17290 / CCUG 55495 / CIP 109462 / JCM 13490 / 255-15).